The chain runs to 154 residues: Myoglobin (154 aa).

In terms of domain architecture, Globin spans 2–148; it reads GLSDGEWELV…FRNDIAAKYK (147 aa). Residue Ser-4 is modified to Phosphoserine. At Thr-68 the chain carries Phosphothreonine. His-94 is a binding site for heme b.

It belongs to the globin family. In terms of assembly, monomeric.

It localises to the cytoplasm. The protein resides in the sarcoplasm. It carries out the reaction Fe(III)-heme b-[protein] + nitric oxide + H2O = Fe(II)-heme b-[protein] + nitrite + 2 H(+). The enzyme catalyses H2O2 + AH2 = A + 2 H2O. In terms of biological role, monomeric heme protein which primary function is to store oxygen and facilitate its diffusion within muscle tissues. Reversibly binds oxygen through a pentacoordinated heme iron and enables its timely and efficient release as needed during periods of heightened demand. Depending on the oxidative conditions of tissues and cells, and in addition to its ability to bind oxygen, it also has a nitrite reductase activity whereby it regulates the production of bioactive nitric oxide. Under stress conditions, like hypoxia and anoxia, it also protects cells against reactive oxygen species thanks to its pseudoperoxidase activity. This chain is Myoglobin (MB), found in Loxodonta africana (African elephant).